Reading from the N-terminus, the 334-residue chain is Glucosyltransferase 3 (334 aa).

UDP-binding positions include Thr16, Arg179, and 249-254; that span reads SHKSAT.

This sequence belongs to the Gtf3 glucosyltransferase family. As to quaternary structure, homotetramer; a dimer of dimers.

The protein operates within protein modification; protein glycosylation. In terms of biological role, required for polymorphic O-glycosylation of the serine-rich repeat protein in this bacteria. Catalyzes the second step in glycosylation by transferring glucose from UDP-glucose to the terminal GlcNAc moiety of the 3-O-(N-acetyl-alpha-D-glucosaminyl)-L-seryl-[protein] resulting from the first glycosylation step. Its function is as follows. Part of the accessory SecA2/SecY2 system specifically required to export GspB, a serine-rich repeat cell wall protein encoded upstream in the same operon. This Streptococcus gordonii protein is Glucosyltransferase 3.